Reading from the N-terminus, the 199-residue chain is Elongation factor Ts (199 aa).

Residues threonine 82–valine 85 are involved in Mg(2+) ion dislocation from EF-Tu.

It belongs to the EF-Ts family.

It localises to the cytoplasm. In terms of biological role, associates with the EF-Tu.GDP complex and induces the exchange of GDP to GTP. It remains bound to the aminoacyl-tRNA.EF-Tu.GTP complex up to the GTP hydrolysis stage on the ribosome. In Leptospira interrogans serogroup Icterohaemorrhagiae serovar Lai (strain 56601), this protein is Elongation factor Ts.